The following is a 195-amino-acid chain: MNITKAELVISAVKPEQYPDSGRPEVALAGRSNVGKSSFINKMINRKNLARTSSKPGKTQTLNFYLINDSFYFVDVPGYGFARVSKQERQKWGKMMETYFTTRETLKAALLLVDLRHPPTKDDVMMYEFFKHYEIPVIVIATKADKVPRGKQQKHAKIARETLRLAAGDSLILFSSETGQGKEEAWAALLPFLTE.

The region spanning 22–195 is the EngB-type G domain; sequence GRPEVALAGR…WAALLPFLTE (174 aa). Residues 30-37, 57-61, 75-78, 142-145, and 174-176 each bind GTP; these read GRSNVGKS, GKTQT, DVPG, TKAD, and FSS. 2 residues coordinate Mg(2+): Ser37 and Thr59.

This sequence belongs to the TRAFAC class TrmE-Era-EngA-EngB-Septin-like GTPase superfamily. EngB GTPase family. Mg(2+) is required as a cofactor.

Functionally, necessary for normal cell division and for the maintenance of normal septation. The polypeptide is Probable GTP-binding protein EngB (Geobacillus thermodenitrificans (strain NG80-2)).